Here is a 32-residue protein sequence, read N- to C-terminus: MEAITYTFILFLTLGLLFFAVAFRETPRITKK.

A helical membrane pass occupies residues 3-23; the sequence is AITYTFILFLTLGLLFFAVAF.

The protein belongs to the PsbT family. As to quaternary structure, PSII is composed of 1 copy each of membrane proteins PsbA, PsbB, PsbC, PsbD, PsbE, PsbF, PsbH, PsbI, PsbJ, PsbK, PsbL, PsbM, PsbT, PsbX, PsbY, PsbZ, Psb30/Ycf12, peripheral proteins PsbO, CyanoQ (PsbQ), PsbU, PsbV and a large number of cofactors. It forms dimeric complexes.

It is found in the cellular thylakoid membrane. Found at the monomer-monomer interface of the photosystem II (PS II) dimer, plays a role in assembly and dimerization of PSII. PSII is a light-driven water plastoquinone oxidoreductase, using light energy to abstract electrons from H(2)O, generating a proton gradient subsequently used for ATP formation. This is Photosystem II reaction center protein T from Synechococcus sp. (strain JA-2-3B'a(2-13)) (Cyanobacteria bacterium Yellowstone B-Prime).